Consider the following 187-residue polypeptide: Adenylate kinase (187 aa).

Gly11 to Thr16 contacts ATP. An NMP region spans residues Ser31–Val60. Residues Thr32, Arg37, Asp58 to Val60, Gly86 to Arg89, and Gln93 contribute to the AMP site. Residues Gly127 to Asp137 form an LID region. Arg128 provides a ligand contact to ATP. Residues Arg134 and Arg145 each contribute to the AMP site. Gly173 serves as a coordination point for ATP.

Belongs to the adenylate kinase family. In terms of assembly, monomer.

It is found in the cytoplasm. The enzyme catalyses AMP + ATP = 2 ADP. The protein operates within purine metabolism; AMP biosynthesis via salvage pathway; AMP from ADP: step 1/1. Catalyzes the reversible transfer of the terminal phosphate group between ATP and AMP. Plays an important role in cellular energy homeostasis and in adenine nucleotide metabolism. The polypeptide is Adenylate kinase (Leptospira interrogans serogroup Icterohaemorrhagiae serovar copenhageni (strain Fiocruz L1-130)).